The sequence spans 270 residues: tRNA pseudouridine synthase A (270 aa).

Asp-51 (nucleophile) is an active-site residue. Tyr-109 provides a ligand contact to substrate.

It belongs to the tRNA pseudouridine synthase TruA family. Homodimer.

It carries out the reaction uridine(38/39/40) in tRNA = pseudouridine(38/39/40) in tRNA. Its function is as follows. Formation of pseudouridine at positions 38, 39 and 40 in the anticodon stem and loop of transfer RNAs. This is tRNA pseudouridine synthase A from Variovorax paradoxus (strain S110).